We begin with the raw amino-acid sequence, 142 residues long: Large ribosomal subunit protein uL11 (142 aa).

Belongs to the universal ribosomal protein uL11 family. In terms of assembly, part of the ribosomal stalk of the 50S ribosomal subunit. Interacts with L10 and the large rRNA to form the base of the stalk. L10 forms an elongated spine to which L12 dimers bind in a sequential fashion forming a multimeric L10(L12)X complex. In terms of processing, one or more lysine residues are methylated.

In terms of biological role, forms part of the ribosomal stalk which helps the ribosome interact with GTP-bound translation factors. The polypeptide is Large ribosomal subunit protein uL11 (Shigella boydii serotype 18 (strain CDC 3083-94 / BS512)).